Here is a 490-residue protein sequence, read N- to C-terminus: Glutathione reductase (490 aa).

FAD is bound by residues Ser-19 and Gly-20. Ser-19 contributes to the glutathione binding site. Arg-26 is a binding site for glutathione. Positions 39, 48, 49, and 57 each coordinate FAD. Cys-49 and Cys-54 are oxidised to a cystine. Residue Tyr-110 coordinates glutathione. FAD is bound at residue Ala-126. Residues Ala-208, Ile-211, Glu-214, Arg-231, and Arg-237 each coordinate NADP(+). Ser-246 provides a ligand contact to glutathione. Position 297 (Gly-297) interacts with NADP(+). Asp-337 provides a ligand contact to FAD. Glu-343 contributes to the NADP(+) binding site. Thr-345 provides a ligand contact to FAD. A glutathione-binding site is contributed by Arg-353. Val-379 contributes to the NADP(+) binding site. Residue Lys-432 participates in glutathione binding. An FAD-binding site is contributed by His-479. Catalysis depends on His-479, which acts as the Proton acceptor.

The protein belongs to the class-I pyridine nucleotide-disulfide oxidoreductase family. As to quaternary structure, homodimer. The cofactor is FAD.

The protein resides in the cytoplasm. It is found in the mitochondrion. The enzyme catalyses 2 glutathione + NADP(+) = glutathione disulfide + NADPH + H(+). In terms of biological role, catalyzes the reduction of glutathione disulfide (GSSG) to reduced glutathione (GSH). Constitutes the major mechanism to maintain a high GSH:GSSG ratio in the cytosol. This is Glutathione reductase (GLR1) from Debaryomyces hansenii (strain ATCC 36239 / CBS 767 / BCRC 21394 / JCM 1990 / NBRC 0083 / IGC 2968) (Yeast).